The sequence spans 121 residues: Large ribosomal subunit protein uL18 (121 aa).

This sequence belongs to the universal ribosomal protein uL18 family. As to quaternary structure, part of the 50S ribosomal subunit; part of the 5S rRNA/L5/L18/L25 subcomplex. Contacts the 5S and 23S rRNAs.

Its function is as follows. This is one of the proteins that bind and probably mediate the attachment of the 5S RNA into the large ribosomal subunit, where it forms part of the central protuberance. The sequence is that of Large ribosomal subunit protein uL18 from Streptococcus thermophilus (strain CNRZ 1066).